A 389-amino-acid chain; its full sequence is Large envelope protein (389 aa).

The residue at position 1 (Met1) is an N-acetylmethionine. Gly2 carries the N-myristoyl glycine; by host lipid modification. The interval 2-108 is pre-S1; it reads GTNLSVPNPL…PPLRDTHPQA (107 aa). Residues 2–163 are pre-S; the sequence is GTNLSVPNPL…LSTTGDPVPN (162 aa). At 2 to 170 the chain is on the virion surface; in external conformation side; the sequence is GTNLSVPNPL…VPNMENIASG (169 aa). The Intravirion; in internal conformation portion of the chain corresponds to 2 to 242; the sequence is GTNLSVPNPL…PGYRWMCLRR (241 aa). The segment at 109 to 163 is pre-S2; the sequence is MQWNSTTFHQTLQDPRVRALYFPAGGSSSGTVNPVQNTASSISSILSTTGDPVPN. The chain crosses the membrane as a helical span at residues 171 to 191; sequence LLGPLLVLQAGFFSLTKILTI. The Intravirion; in external conformation segment spans residues 192–242; the sequence is PLSLDSWWTSLNFLGETPVCLGQNSQSQISSHSPTCCPPICPGYRWMCLRR. The helical transmembrane segment at 243-263 threads the bilayer; it reads FIIFLCILLLCLIFLLVLLDY. Residues 264–337 are Virion surface-facing; sequence QGMLPVCPLI…WASVRFSWLS (74 aa). N-linked (GlcNAc...) asparagine; by host glycosylation is present at Asn309. A helical membrane pass occupies residues 338–358; it reads LLVPFVQWFVGLSPTVWLSVI. The Intravirion segment spans residues 359–364; the sequence is WMMWFW. Residues 365–387 form a helical membrane-spanning segment; sequence GPSLYNILSPFMPLLPIFFCLWV. Residues 388 to 389 lie on the Virion surface side of the membrane; sequence YI.

This sequence belongs to the orthohepadnavirus major surface antigen family. Interacts (via its myristoylated pre-S1 region) with the host SLC10A1/NTCP; this interaction is essential for viral entry. As to quaternary structure, in its internal form (Li-HBsAg), interacts with the capsid protein and with the isoform S. Interacts with host chaperone CANX. In terms of assembly, associates with host chaperone CANX through its pre-S2 N glycan; this association may be essential for isoform M proper secretion. Interacts with isoform L. Interacts with the antigens of satellite virus HDV (HDVAgs); this interaction is required for encapsidation of HDV genomic RNA. Post-translationally, isoform M is N-terminally acetylated by host at a ratio of 90%, and N-glycosylated by host at the pre-S2 region. In terms of processing, myristoylated; this modification is essential for its interaction with the host protein SLC10A1/NTCP.

The protein resides in the virion membrane. The large envelope protein exists in two topological conformations, one which is termed 'external' or Le-HBsAg and the other 'internal' or Li-HBsAg. In its external conformation the protein attaches the virus to cell receptors and thereby initiating infection. This interaction determines the species specificity and liver tropism. This attachment induces virion internalization predominantly through caveolin-mediated endocytosis. The large envelope protein also assures fusion between virion membrane and endosomal membrane. In its internal conformation the protein plays a role in virion morphogenesis and mediates the contact with the nucleocapsid like a matrix protein. In terms of biological role, the middle envelope protein plays an important role in the budding of the virion. It is involved in the induction of budding in a nucleocapsid independent way. In this process the majority of envelope proteins bud to form subviral lipoprotein particles of 22 nm of diameter that do not contain a nucleocapsid. This is Large envelope protein from Hepatitis B virus genotype B2 (isolate Indonesia/pIDW420/1988) (HBV-B).